A 307-amino-acid chain; its full sequence is Protein pxr1 (307 aa).

Residues M1–K11 are compositionally biased toward basic residues. Disordered regions lie at residues M1–T25 and N144–D234. A compositionally biased stretch (polar residues) spans D15–T25. The G-patch domain maps to T25–K79. Basic and acidic residues-rich tracts occupy residues L154–E168 and G206–Q221.

It belongs to the PINX1 family.

It is found in the nucleus. The protein resides in the nucleolus. Involved in rRNA-processing at A0, A1 and A2 sites and negatively regulates telomerase. The sequence is that of Protein pxr1 (pxr1) from Neosartorya fischeri (strain ATCC 1020 / DSM 3700 / CBS 544.65 / FGSC A1164 / JCM 1740 / NRRL 181 / WB 181) (Aspergillus fischerianus).